The following is a 480-amino-acid chain: Glutamyl-tRNA(Gln) amidotransferase subunit A (480 aa).

Residues Lys-74 and Ser-149 each act as charge relay system in the active site. Catalysis depends on Ser-173, which acts as the Acyl-ester intermediate.

It belongs to the amidase family. GatA subfamily. As to quaternary structure, heterotrimer of A, B and C subunits.

It catalyses the reaction L-glutamyl-tRNA(Gln) + L-glutamine + ATP + H2O = L-glutaminyl-tRNA(Gln) + L-glutamate + ADP + phosphate + H(+). Functionally, allows the formation of correctly charged Gln-tRNA(Gln) through the transamidation of misacylated Glu-tRNA(Gln) in organisms which lack glutaminyl-tRNA synthetase. The reaction takes place in the presence of glutamine and ATP through an activated gamma-phospho-Glu-tRNA(Gln). In Prochlorococcus marinus (strain MIT 9312), this protein is Glutamyl-tRNA(Gln) amidotransferase subunit A.